The chain runs to 124 residues: Small ribosomal subunit protein uS12 (124 aa).

A 3-methylthioaspartic acid modification is found at Asp-89.

Belongs to the universal ribosomal protein uS12 family. As to quaternary structure, part of the 30S ribosomal subunit. Contacts proteins S8 and S17. May interact with IF1 in the 30S initiation complex.

Functionally, with S4 and S5 plays an important role in translational accuracy. Interacts with and stabilizes bases of the 16S rRNA that are involved in tRNA selection in the A site and with the mRNA backbone. Located at the interface of the 30S and 50S subunits, it traverses the body of the 30S subunit contacting proteins on the other side and probably holding the rRNA structure together. The combined cluster of proteins S8, S12 and S17 appears to hold together the shoulder and platform of the 30S subunit. This Buchnera aphidicola subsp. Cinara cedri (strain Cc) protein is Small ribosomal subunit protein uS12.